Consider the following 881-residue polypeptide: DNA mismatch repair protein MutS (881 aa).

An ATP-binding site is contributed by 626 to 633 (GPNMAGKS).

The protein belongs to the DNA mismatch repair MutS family.

This protein is involved in the repair of mismatches in DNA. It is possible that it carries out the mismatch recognition step. This protein has a weak ATPase activity. The protein is DNA mismatch repair protein MutS of Desulfosudis oleivorans (strain DSM 6200 / JCM 39069 / Hxd3) (Desulfococcus oleovorans).